Consider the following 438-residue polypeptide: Enolase (438 aa).

Residue Gln163 coordinates (2R)-2-phosphoglycerate. Glu205 functions as the Proton donor in the catalytic mechanism. Asp243, Glu292, and Asp319 together coordinate Mg(2+). The (2R)-2-phosphoglycerate site is built by Lys344, Arg373, Ser374, and Lys395. The Proton acceptor role is filled by Lys344.

This sequence belongs to the enolase family. Mg(2+) is required as a cofactor.

It localises to the cytoplasm. The protein resides in the secreted. It is found in the cell surface. The enzyme catalyses (2R)-2-phosphoglycerate = phosphoenolpyruvate + H2O. Its pathway is carbohydrate degradation; glycolysis; pyruvate from D-glyceraldehyde 3-phosphate: step 4/5. In terms of biological role, catalyzes the reversible conversion of 2-phosphoglycerate (2-PG) into phosphoenolpyruvate (PEP). It is essential for the degradation of carbohydrates via glycolysis. The sequence is that of Enolase from Streptococcus agalactiae.